The primary structure comprises 422 residues: UDP-N-acetylglucosamine 1-carboxyvinyltransferase (422 aa).

22-23 (KN) is a phosphoenolpyruvate binding site. Arg92 lines the UDP-N-acetyl-alpha-D-glucosamine pocket. Cys116 functions as the Proton donor in the catalytic mechanism. Cys116 carries the post-translational modification 2-(S-cysteinyl)pyruvic acid O-phosphothioketal. UDP-N-acetyl-alpha-D-glucosamine-binding positions include 121 to 125 (RPVDQ), Asp305, and Ile327.

Belongs to the EPSP synthase family. MurA subfamily.

The protein localises to the cytoplasm. It catalyses the reaction phosphoenolpyruvate + UDP-N-acetyl-alpha-D-glucosamine = UDP-N-acetyl-3-O-(1-carboxyvinyl)-alpha-D-glucosamine + phosphate. The protein operates within cell wall biogenesis; peptidoglycan biosynthesis. Cell wall formation. Adds enolpyruvyl to UDP-N-acetylglucosamine. This is UDP-N-acetylglucosamine 1-carboxyvinyltransferase from Sorangium cellulosum (strain So ce56) (Polyangium cellulosum (strain So ce56)).